Consider the following 533-residue polypeptide: Bifunctional purine biosynthesis protein PurH (533 aa).

Residues 1-148 (MDTPRPIKRA…KNHKDVTIVV (148 aa)) enclose the MGS-like domain.

This sequence belongs to the PurH family.

The catalysed reaction is (6R)-10-formyltetrahydrofolate + 5-amino-1-(5-phospho-beta-D-ribosyl)imidazole-4-carboxamide = 5-formamido-1-(5-phospho-D-ribosyl)imidazole-4-carboxamide + (6S)-5,6,7,8-tetrahydrofolate. It carries out the reaction IMP + H2O = 5-formamido-1-(5-phospho-D-ribosyl)imidazole-4-carboxamide. The protein operates within purine metabolism; IMP biosynthesis via de novo pathway; 5-formamido-1-(5-phospho-D-ribosyl)imidazole-4-carboxamide from 5-amino-1-(5-phospho-D-ribosyl)imidazole-4-carboxamide (10-formyl THF route): step 1/1. Its pathway is purine metabolism; IMP biosynthesis via de novo pathway; IMP from 5-formamido-1-(5-phospho-D-ribosyl)imidazole-4-carboxamide: step 1/1. This Colwellia psychrerythraea (strain 34H / ATCC BAA-681) (Vibrio psychroerythus) protein is Bifunctional purine biosynthesis protein PurH.